The chain runs to 104 residues: Replication restart protein PriB (104 aa).

The SSB domain occupies 1–101 (MTNRLVLSGT…LHAEQIELID (101 aa)).

This sequence belongs to the PriB family. Homodimer. Interacts with PriA and DnaT. Component of the replication restart primosome. Primosome assembly occurs via a 'hand-off' mechanism. PriA binds to replication forks, subsequently PriB then DnaT bind; DnaT then displaces ssDNA to generate the helicase loading substrate.

Functionally, involved in the restart of stalled replication forks, which reloads the replicative helicase on sites other than the origin of replication; the PriA-PriB pathway is the major replication restart pathway. During primosome assembly it facilitates complex formation between PriA and DnaT on DNA; stabilizes PriA on DNA. Stimulates the DNA unwinding activity of PriA helicase. In Escherichia coli (strain ATCC 8739 / DSM 1576 / NBRC 3972 / NCIMB 8545 / WDCM 00012 / Crooks), this protein is Replication restart protein PriB.